Here is a 1359-residue protein sequence, read N- to C-terminus: Tripeptidyl-peptidase 2 (1359 aa).

The disordered stretch occupies residues 45–81; sequence AASTTTRGGPSPSAGVAPRAMPSSSSSPPSAAEGTTA. Residues 64–81 show a composition bias toward low complexity; the sequence is AMPSSSSSPPSAAEGTTA. One can recognise a Peptidase S8 domain in the interval 102-600; it reads EIGVDRFLAA…HGLLQVDRAF (499 aa). Residues Asp126, His353, and Ser539 each act as charge relay system in the active site.

This sequence belongs to the peptidase S8 family.

The enzyme catalyses Release of an N-terminal tripeptide from a polypeptide.. In terms of biological role, serine protease that may function in the proteasome pathway. This chain is Tripeptidyl-peptidase 2 (TPP2), found in Oryza sativa subsp. japonica (Rice).